A 358-amino-acid polypeptide reads, in one-letter code: GTPase Obg (358 aa).

In terms of domain architecture, Obg spans M1–L159. The OBG-type G domain occupies A160 to E334. GTP is bound by residues G166–S173, F191–Y195, D213–G216, N284–D287, and S315–L317. 2 residues coordinate Mg(2+): S173 and T193. Residues D337–E358 are disordered. Residues R341–E358 show a composition bias toward basic and acidic residues.

The protein belongs to the TRAFAC class OBG-HflX-like GTPase superfamily. OBG GTPase family. As to quaternary structure, monomer. The cofactor is Mg(2+).

It localises to the cytoplasm. An essential GTPase which binds GTP, GDP and possibly (p)ppGpp with moderate affinity, with high nucleotide exchange rates and a fairly low GTP hydrolysis rate. Plays a role in control of the cell cycle, stress response, ribosome biogenesis and in those bacteria that undergo differentiation, in morphogenesis control. The sequence is that of GTPase Obg from Alkalilimnicola ehrlichii (strain ATCC BAA-1101 / DSM 17681 / MLHE-1).